The chain runs to 126 residues: Acyl carrier protein 2, mitochondrial (126 aa).

The N-terminal 36 residues, 1 to 36, are a transit peptide targeting the mitochondrion; it reads MAARGAMLRYLRVNVNPTIQNPRECVLPFSILLRRF. A Carrier domain is found at 48-123; that stretch reads SEVTDRVLSV…LAVDFIASHP (76 aa). Position 83 is an O-(pantetheine 4'-phosphoryl)serine (S83).

This sequence belongs to the acyl carrier protein (ACP) family. In terms of assembly, complex I is composed of at least 49 different subunits. In terms of processing, 4'-phosphopantetheine is transferred from CoA to a specific serine of the apo-ACP-like protein.

It is found in the mitochondrion. The protein operates within lipid metabolism; fatty acid biosynthesis. Its function is as follows. Carrier of the growing fatty acid chain in fatty acid biosynthesis. May be involved in the synthesis of short and medium chain fatty acids. Accessory and non-catalytic subunit of the mitochondrial membrane respiratory chain NADH dehydrogenase (Complex I), which functions in the transfer of electrons from NADH to the respiratory chain. The protein is Acyl carrier protein 2, mitochondrial (MTACP2) of Arabidopsis thaliana (Mouse-ear cress).